Consider the following 858-residue polypeptide: MQNPEDHHSDRELSSPSNTTKSNDDKNVEITLDIRDDTMAGQSVKNATKTKAEEAELEALGKNLQKKCSFGATIVRNVSMRMRLPSFKRQPHPPQTFDRSSTAAQNALKGFKFISKTDGGSGWDTVQQRFDELTATSDSLLPRAKFGECIGMNRESEGFALELFNALARRRNITSGCISKEQLKEFWDQIANQSFDSRLRTFFDMVDKDADGRLTEEEVREIICLSASANKLSNIQKQAAEYAALIMEELDRDQKGYIMLENLEMLLLEAPIQPDGEKGLNRNLSHMLSMKLKPTLETNPIKRWYNNLKYFLLDNWRRVWVLLLWIGVMAGLFAYKYVQYKNKAAFNVMGHCVCVAKGAAEVLKLNMALILLPVCRNTITWLRNKTKLGGAVPFDDNINFHKVVAGAIAVGVGIHVLAHMTCDFPRLLNASPEKYKPMEPYFGDQPRNYWHFVKGVEGVSGIIMVVLMSIAFTLASQRFRRNKIRLPRPLNKLTGFNAFWYSHHLFVIVYSLLIVHGIELYLTKEWYKKTTWMYLAIPIILYSGERLLRAFRSSVKDVKILKVAMYTGNVLTLQMSKPQGFNYKSGQYMFVNCAAVSPFEWHPFSITSAPGDEYLSVHIRIVGDWTTKLRDVFSEPSPTGRSGLVADYLQDKINYPKVLIDGPYGAPAQDYKEYEVLLLVGLGIGATPMISIVKDIVNNMKEEKYDHDLEKKTVSGSGRSNFKRVYFYWVTREQGSFDWFKGLMNELAVMDCDGIIEMHNYCTSVYEEGDARSALIAMLQSINHAKNGVDIVSGTRVKTHFARPNWRNVYKRIALNHTDARVGVFYCGAPALTKVLGQLALDFSHKTSTKFDFHKENF.

Residues 1-13 (MQNPEDHHSDREL) show a composition bias toward basic and acidic residues. The interval 1-27 (MQNPEDHHSDRELSSPSNTTKSNDDKN) is disordered. The Cytoplasmic segment spans residues 1 to 318 (MQNPEDHHSD…KYFLLDNWRR (318 aa)). EF-hand-like stretches follow at residues 134–144 (TATSDSLLPRA) and 171–182 (RNITSGCISKEQ). 2 EF-hand domains span residues 194–229 (SFDS…SASA) and 238–273 (QAAE…APIQ). Positions 207, 209, 211, 213, and 218 each coordinate Ca(2+). A helical transmembrane segment spans residues 319–339 (VWVLLLWIGVMAGLFAYKYVQ). Topologically, residues 340–351 (YKNKAAFNVMGH) are extracellular. Residues 352-372 (CVCVAKGAAEVLKLNMALILL) form a helical membrane-spanning segment. Residues 357-514 (KGAAEVLKLN…LFVIVYSLLI (158 aa)) form the Ferric oxidoreductase domain. The Cytoplasmic segment spans residues 373 to 397 (PVCRNTITWLRNKTKLGGAVPFDDN). Residues 398-418 (INFHKVVAGAIAVGVGIHVLA) traverse the membrane as a helical segment. At 419–454 (HMTCDFPRLLNASPEKYKPMEPYFGDQPRNYWHFVK) the chain is on the extracellular side. The helical transmembrane segment at 455-475 (GVEGVSGIIMVVLMSIAFTLA) threads the bilayer. Over 476–497 (SQRFRRNKIRLPRPLNKLTGFN) the chain is Cytoplasmic. A helical transmembrane segment spans residues 498–518 (AFWYSHHLFVIVYSLLIVHGI). The Extracellular segment spans residues 519-675 (ELYLTKEWYK…APAQDYKEYE (157 aa)). The FAD-binding FR-type domain occupies 548–670 (LRAFRSSVKD…DGPYGAPAQD (123 aa)). The helical transmembrane segment at 676–696 (VLLLVGLGIGATPMISIVKDI) threads the bilayer. Topologically, residues 697 to 858 (VNNMKEEKYD…TKFDFHKENF (162 aa)) are cytoplasmic.

Belongs to the RBOH (TC 5.B.1.3) family. In terms of assembly, monomer and homodimer. In terms of processing, phosphorylated by CPK. As to expression, expressed in leaves.

It localises to the membrane. Its function is as follows. Calcium-dependent NADPH oxidase that generates superoxide. May be responsible for the oxidative burst in response to pathogen attack in the leaves. In Solanum tuberosum (Potato), this protein is Respiratory burst oxidase homolog protein D (RBOHD).